We begin with the raw amino-acid sequence, 417 residues long: UDP-N-acetylglucosamine 1-carboxyvinyltransferase (417 aa).

22 to 23 (KN) provides a ligand contact to phosphoenolpyruvate. Arg93 is a binding site for UDP-N-acetyl-alpha-D-glucosamine. Catalysis depends on Cys117, which acts as the Proton donor. Residue Cys117 is modified to 2-(S-cysteinyl)pyruvic acid O-phosphothioketal. UDP-N-acetyl-alpha-D-glucosamine-binding positions include 122-126 (RPVDQ), Asp304, and Ile326.

This sequence belongs to the EPSP synthase family. MurA subfamily.

It is found in the cytoplasm. It carries out the reaction phosphoenolpyruvate + UDP-N-acetyl-alpha-D-glucosamine = UDP-N-acetyl-3-O-(1-carboxyvinyl)-alpha-D-glucosamine + phosphate. It participates in cell wall biogenesis; peptidoglycan biosynthesis. Its function is as follows. Cell wall formation. Adds enolpyruvyl to UDP-N-acetylglucosamine. This chain is UDP-N-acetylglucosamine 1-carboxyvinyltransferase, found in Laribacter hongkongensis (strain HLHK9).